The sequence spans 610 residues: F-box/LRR-repeat protein 4 (610 aa).

The F-box domain maps to 5 to 52; the sequence is DRINNCLPEELILEIFRRLESKPNRDACSLVCKRWLSLERFSRTTLRI. LRR repeat units follow at residues 53 to 79, 124 to 149, 150 to 175, 178 to 200, 201 to 227, 228 to 253, 256 to 277, 278 to 303, 304 to 329, 330 to 355, 356 to 381, 382 to 407, 408 to 433, 434 to 459, 460 to 484, 485 to 510, 511 to 536, 537 to 562, and 563 to 588; these read GASF…HVDE, SSSL…SLIW, CPNV…DLQG, VGDQ…NLRF, CEGL…GVAA, SAKI…YLDS, IHDK…LKLQ, CVSV…ALYS, FQHF…TLSD, CYFV…EING, CHNI…ALLY, CQRI…HLVD, CSGI…HIRR, CYEI…SLRF, CDKV…NVSG, CNQI…DISV, LQNI…VLSH, CHHI…HMVY, and CPGI…LIEK. The tract at residues 88–125 is disordered; that stretch reads LSPSPKRKRGRDSSSPSSSKRKKLTDKTHSGAENVESS.

The sequence is that of F-box/LRR-repeat protein 4 (FBL4) from Arabidopsis thaliana (Mouse-ear cress).